We begin with the raw amino-acid sequence, 72 residues long: Small ribosomal subunit protein bS18 (72 aa).

The protein belongs to the bacterial ribosomal protein bS18 family. As to quaternary structure, part of the 30S ribosomal subunit. Forms a tight heterodimer with protein bS6.

Its function is as follows. Binds as a heterodimer with protein bS6 to the central domain of the 16S rRNA, where it helps stabilize the platform of the 30S subunit. This Trichodesmium erythraeum (strain IMS101) protein is Small ribosomal subunit protein bS18.